Here is a 642-residue protein sequence, read N- to C-terminus: Threonine--tRNA ligase (642 aa).

The TGS domain occupies 1–61; it reads MPVITLPDGS…ENDATLAIIT (61 aa). Residues 243–534 are catalytic; that stretch reads DHRKIGKQLD…LTEEFAGFFP (292 aa). The Zn(2+) site is built by cysteine 334, histidine 385, and histidine 511.

It belongs to the class-II aminoacyl-tRNA synthetase family. Homodimer. The cofactor is Zn(2+).

The protein resides in the cytoplasm. It carries out the reaction tRNA(Thr) + L-threonine + ATP = L-threonyl-tRNA(Thr) + AMP + diphosphate + H(+). Catalyzes the attachment of threonine to tRNA(Thr) in a two-step reaction: L-threonine is first activated by ATP to form Thr-AMP and then transferred to the acceptor end of tRNA(Thr). Also edits incorrectly charged L-seryl-tRNA(Thr). The protein is Threonine--tRNA ligase of Salmonella paratyphi C (strain RKS4594).